We begin with the raw amino-acid sequence, 530 residues long: GMP synthase [glutamine-hydrolyzing] (530 aa).

The 190-residue stretch at 18–207 (TILVLDFGSQ…AVDICQAKTN (190 aa)) folds into the Glutamine amidotransferase type-1 domain. Catalysis depends on C94, which acts as the Nucleophile. Active-site residues include H181 and E183. Residues 208-405 (WSMENFIDTE…LGVPEDLVWR (198 aa)) enclose the GMPS ATP-PPase domain. Residue 236–242 (SGGVDST) coordinates ATP. Residues R309, D467, K522, and E528 each contribute to the XMP site.

In terms of assembly, homodimer. The cofactor is Mg(2+).

It localises to the cytoplasm. The protein localises to the cytosol. The enzyme catalyses XMP + L-glutamine + ATP + H2O = GMP + L-glutamate + AMP + diphosphate + 2 H(+). It participates in purine metabolism; GMP biosynthesis; GMP from XMP (L-Gln route): step 1/1. Catalyzes the conversion of xanthine monophosphate (XMP) to GMP in the presence of glutamine and ATP through an adenyl-XMP intermediate. This chain is GMP synthase [glutamine-hydrolyzing] (GUA1), found in Candida albicans (strain SC5314 / ATCC MYA-2876) (Yeast).